The chain runs to 294 residues: NAD kinase (294 aa).

The Proton acceptor role is filled by Asp74. NAD(+)-binding positions include 74 to 75 (DG), 148 to 149 (NE), His159, Arg176, Asp178, 189 to 194 (TAYSLS), and Gln249.

It belongs to the NAD kinase family. Requires a divalent metal cation as cofactor.

It is found in the cytoplasm. The enzyme catalyses NAD(+) + ATP = ADP + NADP(+) + H(+). Its function is as follows. Involved in the regulation of the intracellular balance of NAD and NADP, and is a key enzyme in the biosynthesis of NADP. Catalyzes specifically the phosphorylation on 2'-hydroxyl of the adenosine moiety of NAD to yield NADP. The protein is NAD kinase of Vibrio parahaemolyticus serotype O3:K6 (strain RIMD 2210633).